Reading from the N-terminus, the 382-residue chain is Dual-specificity RNA methyltransferase RlmN (382 aa).

Glu-94 functions as the Proton acceptor in the catalytic mechanism. The 237-residue stretch at 100-336 (EANRGTLCVS…NTITRKTRGD (237 aa)) folds into the Radical SAM core domain. Cys-107 and Cys-342 are disulfide-bonded. Cys-114, Cys-118, and Cys-121 together coordinate [4Fe-4S] cluster. S-adenosyl-L-methionine is bound by residues 168–169 (GE), Ser-200, 222–224 (SLH), and Asn-299. Cys-342 (S-methylcysteine intermediate) is an active-site residue.

It belongs to the radical SAM superfamily. RlmN family. Requires [4Fe-4S] cluster as cofactor.

The protein localises to the cytoplasm. The catalysed reaction is adenosine(2503) in 23S rRNA + 2 reduced [2Fe-2S]-[ferredoxin] + 2 S-adenosyl-L-methionine = 2-methyladenosine(2503) in 23S rRNA + 5'-deoxyadenosine + L-methionine + 2 oxidized [2Fe-2S]-[ferredoxin] + S-adenosyl-L-homocysteine. It carries out the reaction adenosine(37) in tRNA + 2 reduced [2Fe-2S]-[ferredoxin] + 2 S-adenosyl-L-methionine = 2-methyladenosine(37) in tRNA + 5'-deoxyadenosine + L-methionine + 2 oxidized [2Fe-2S]-[ferredoxin] + S-adenosyl-L-homocysteine. Specifically methylates position 2 of adenine 2503 in 23S rRNA and position 2 of adenine 37 in tRNAs. m2A2503 modification seems to play a crucial role in the proofreading step occurring at the peptidyl transferase center and thus would serve to optimize ribosomal fidelity. This chain is Dual-specificity RNA methyltransferase RlmN, found in Legionella pneumophila subsp. pneumophila (strain Philadelphia 1 / ATCC 33152 / DSM 7513).